A 166-amino-acid chain; its full sequence is Peptide methionine sulfoxide reductase MsrA (166 aa).

The active site involves Cys-11.

It belongs to the MsrA Met sulfoxide reductase family.

The catalysed reaction is L-methionyl-[protein] + [thioredoxin]-disulfide + H2O = L-methionyl-(S)-S-oxide-[protein] + [thioredoxin]-dithiol. It catalyses the reaction [thioredoxin]-disulfide + L-methionine + H2O = L-methionine (S)-S-oxide + [thioredoxin]-dithiol. Functionally, has an important function as a repair enzyme for proteins that have been inactivated by oxidation. Catalyzes the reversible oxidation-reduction of methionine sulfoxide in proteins to methionine. The chain is Peptide methionine sulfoxide reductase MsrA from Mycoplasmopsis pulmonis (strain UAB CTIP) (Mycoplasma pulmonis).